The chain runs to 858 residues: Leucine--tRNA ligase (858 aa).

A 'HIGH' region motif is present at residues 42–52 (PYPSGNLHMGH). Over residues 584-594 (NPNRSDSSRYI) the composition is skewed to polar residues. A disordered region spans residues 584 to 611 (NPNRSDSSRYIPSNLVDPNDPKDPETGE). A 'KMSKS' region motif is present at residues 619-623 (TMSKS). Lys-622 contributes to the ATP binding site.

The protein belongs to the class-I aminoacyl-tRNA synthetase family.

The protein localises to the cytoplasm. The enzyme catalyses tRNA(Leu) + L-leucine + ATP = L-leucyl-tRNA(Leu) + AMP + diphosphate. The protein is Leucine--tRNA ligase of Cyanothece sp. (strain PCC 7425 / ATCC 29141).